The chain runs to 4349 residues: Dynein heavy chain, cytoplasmic (4349 aa).

The tract at residues 1-1907 is stem; the sequence is MEVTSAAAPS…YIKMANAKLN (1907 aa). 6 coiled-coil regions span residues 459-480, 1178-1215, 1266-1293, 1334-1354, 1560-1577, and 1640-1670; these read WEEN…RNEK, LMKF…STAQ, SQWE…QAKI, ESRI…KEAL, YKEF…LNRV, and NIPN…EKER. 4 AAA regions span residues 1908–2133, 2201–2459, 2565–2814, and 2908–3177; these read YGFE…VLVS, NAIR…FTTA, EVNT…WVRG, and TFCE…QGKV. Residue 1946 to 1953 coordinates ATP; sequence GPAGTGKT. The stretch at 2194–2217 forms a coiled coil; it reads ANLEALENAIRELAAERHLVVNEL. ATP is bound by residues 2239 to 2246, 2604 to 2611, and 2946 to 2953; these read GNSGSGKS, GPPGSGKT, and GVSGSGKT. Coiled-coil stretches lie at residues 3186 to 3294, 3420 to 3477, and 3774 to 3807; these read LDFV…LAKA, GPLK…EMSR, and DNVI…VEEI. The segment at 3186-3477 is stalk; that stretch reads LDFVTQYIKL…TQAIKAEMSR (292 aa). AAA regions lie at residues 3563–3792 and 4001–4213; these read LSTA…EISA and AERF…IVDT.

The protein belongs to the dynein heavy chain family. As to quaternary structure, consists of at least two heavy chains and a number of intermediate and light chains.

The protein localises to the cytoplasm. It localises to the cytoskeleton. Functionally, cytoplasmic dynein acts as a motor for the intracellular retrograde motility of vesicles and organelles along microtubules. Dynein has ATPase activity; the force-producing power stroke is thought to occur on release of ADP. In Fusarium vanettenii (Neocosmospora pisi), this protein is Dynein heavy chain, cytoplasmic (DHC1).